Here is a 190-residue protein sequence, read N- to C-terminus: Peptidoglycan recognition protein 1 (190 aa).

A signal peptide spans Met1–Ala21. Gln22 is modified (pyrrolidone carboxylic acid). 3 disulfides stabilise this stretch: Cys24–Cys148, Cys40–Cys85, and Cys61–Cys67. The N-acetylmuramoyl-L-alanine amidase domain occupies Gln46–Gly174.

It belongs to the N-acetylmuramoyl-L-alanine amidase 2 family. Homodimer; disulfide-linked. In terms of tissue distribution, synthesized only in bone marrow. The mature protein is stored in the cytoplasmic granules of eosinophils and neutrophils but is absent from monocytes, lymphocytes, or platelets.

It is found in the secreted. Its subcellular location is the cytoplasmic granule. In terms of biological role, innate immunity protein that plays several important functions in antimicrobial and antitumor defense systems. Acts as a pattern receptor that binds to murein peptidoglycans (PGN) of Gram-positive bacteria and thus provides bactericidal activity. Forms an equimolar complex with heat shock protein HSPA1A and induces programmed cell death through apoptosis and necroptosis in tumor cell lines by activating the TNFR1 receptor on the target cell membrane. In addition, acts in complex with the Ca(2+)-binding protein S100A4 as a chemoattractant able to induce lymphocyte movement. Mechanistically, this complex acts as a ligand of the chemotactic receptors CCR5 and CXCR3 which are present on the cells of the immune system. Also promotes the activation of lymphocytes that become able to kill virus-infected cells as well as tumor cells by modulating the spectrum of their target-cell specificity. Induction of cytotoxicity on monocyte surface requires interaction with TREM1 receptor. The polypeptide is Peptidoglycan recognition protein 1 (PGLYRP1) (Bos taurus (Bovine)).